A 345-amino-acid chain; its full sequence is MSERKVLNKYYPPDFDPSKIPKLKLPKDRQYVVRLMAPFNMRCKTCGEYIYKGKKFNARKETVQNELYLGLPIFRFYIKCTRCLAEITFKTDPENTDYAMEHGATRNFQAEKLIEEEEKKIQQEREDEELNNPMKVLENRTRDSKLEMEVLENLQELKELNQRQAQVDFEGMLGQYKELEQRQKQREQEEDEQETKEMLERALVKRLRDSDSEEEAENAKERSKKHIADKPTDILTTDTSTSSQGLSSAVAKKQSWDRSVGGLSVKGALGSLVVRKKPADSASKPSHAAPPPAAAAAGTQTGAVKPESSITSSSASSNIQPVSCQNGSSLGLLGAYSDSDDSSSD.

Residues Cys-43, Cys-46, Cys-80, and Cys-83 each coordinate Zn(2+). A disordered region spans residues 205–345 (KRLRDSDSEE…YSDSDDSSSD (141 aa)). Residues 217 to 232 (ENAKERSKKHIADKPT) are compositionally biased toward basic and acidic residues. 2 stretches are compositionally biased toward low complexity: residues 308 to 317 (SSITSSSASS) and 327 to 337 (GSSLGLLGAYS).

The protein belongs to the CWC16 family. YJU2 subfamily. As to quaternary structure, component of the spliceosome. Present in the activated B complex, the catalytically activated B* complex which catalyzes the branching, the catalytic step 1 C complex catalyzing the exon ligation, and the postcatalytic P complex containing the ligated exons (mRNA) and the excised lariat intron.

The protein localises to the nucleus. In terms of biological role, part of the spliceosome which catalyzes two sequential transesterification reactions, first the excision of the non-coding intron from pre-mRNA and then the ligation of the coding exons to form the mature mRNA. Plays a role in stabilizing the structure of the spliceosome catalytic core and docking of the branch helix into the active site, producing 5'-exon and lariat intron-3'-intermediates. May protect cells from TP53-dependent apoptosis upon dsDNA break damage through association with PRP19-CD5L complex. This chain is Splicing factor YJU2, found in Danio rerio (Zebrafish).